We begin with the raw amino-acid sequence, 262 residues long: Sepiapterin reductase (262 aa).

M1 carries the post-translational modification N-acetylmethionine. Residue 15–21 (GASRGFG) coordinates NADP(+). S33 carries the phosphoserine modification. 43–44 (RS) lines the NADP(+) pocket. At S46 the chain carries Phosphoserine; by CaMK2; in vitro. 70–71 (DL) provides a ligand contact to NADP(+). Substrate contacts are provided by residues 158 to 159 (SL) and Y171. K175 serves as a coordination point for NADP(+). At S196 the chain carries Phosphoserine; by CaMK2; in vitro. Substrate is bound at residue G200. 202–207 (LDTNMQ) provides a ligand contact to NADP(+). Position 214 is a phosphoserine; by CaMK2; in vitro (S214). D258 contacts substrate.

This sequence belongs to the sepiapterin reductase family. Homodimer. In vitro phosphorylation of Ser-46, Ser-196 and Ser-214 by CaMK2 does not change kinetic parameters.

It localises to the cytoplasm. It catalyses the reaction L-erythro-7,8-dihydrobiopterin + NADP(+) = L-sepiapterin + NADPH + H(+). The catalysed reaction is (6R)-L-erythro-5,6,7,8-tetrahydrobiopterin + 2 NADP(+) = 6-pyruvoyl-5,6,7,8-tetrahydropterin + 2 NADPH + 2 H(+). In terms of biological role, catalyzes the final one or two reductions in tetra-hydrobiopterin biosynthesis to form 5,6,7,8-tetrahydrobiopterin. The chain is Sepiapterin reductase (Spr) from Rattus norvegicus (Rat).